The sequence spans 197 residues: Pyridoxal 5'-phosphate synthase subunit PdxT (197 aa).

52 to 54 (GES) provides a ligand contact to L-glutamine. C84 (nucleophile) is an active-site residue. L-glutamine is bound by residues R111 and 139 to 140 (IR). Catalysis depends on charge relay system residues H175 and E177.

This sequence belongs to the glutaminase PdxT/SNO family. As to quaternary structure, in the presence of PdxS, forms a dodecamer of heterodimers. Only shows activity in the heterodimer.

The catalysed reaction is aldehydo-D-ribose 5-phosphate + D-glyceraldehyde 3-phosphate + L-glutamine = pyridoxal 5'-phosphate + L-glutamate + phosphate + 3 H2O + H(+). It catalyses the reaction L-glutamine + H2O = L-glutamate + NH4(+). It functions in the pathway cofactor biosynthesis; pyridoxal 5'-phosphate biosynthesis. Functionally, catalyzes the hydrolysis of glutamine to glutamate and ammonia as part of the biosynthesis of pyridoxal 5'-phosphate. The resulting ammonia molecule is channeled to the active site of PdxS. This Halorubrum lacusprofundi (strain ATCC 49239 / DSM 5036 / JCM 8891 / ACAM 34) protein is Pyridoxal 5'-phosphate synthase subunit PdxT.